The chain runs to 272 residues: F-box protein PP2-B10 (272 aa).

Residues 11-57 (SSPFDSFPEDCISYIISFTNPRDACVAATVSKTFESTVKSDIIWEKF) enclose the F-box domain.

Part of a SCF (ASK-cullin-F-box) protein ligase complex. Interacts with SKP1B/ASK2, ASK11 and ASK12.

The protein operates within protein modification; protein ubiquitination. Its function is as follows. Component of SCF(ASK-cullin-F-box) E3 ubiquitin ligase complexes, which may mediate the ubiquitination and subsequent proteasomal degradation of target proteins. The sequence is that of F-box protein PP2-B10 (PP2B10) from Arabidopsis thaliana (Mouse-ear cress).